Here is a 329-residue protein sequence, read N- to C-terminus: MSSQKCASHLEIARLESLNFKISQLIYFVLIITTLFFTFFALKVIQKKCIFQLSTKILLYQNLFSANIHQIFLGITIVERLNIAFFKLNDKCIPLRPETNCQLYLEMFIAGLSGMVYGQTGLLFERACATFIKKYEKRKSLATGIITSIIVLLLSGSTARIIIWDDPLSEYQLACTSWPSKSRDRSTMFFSICTFISLFNLVISLLIRRHNEKLEYSTPFVVGPRFRKREVIDSTSTICFLTFFQFIFMFIYSFGVFLLGTIREIIGYEQYYFWVVWVYTIPFIAASFPILLIYRIRYSNTNRIMIIKQFTSTKQTQEDHIKQMKNVWN.

Helical transmembrane passes span Leu-25–Ile-45, Ile-57–Ile-77, Tyr-104–Phe-124, Gly-144–Trp-164, Thr-187–Ile-207, Ile-238–Leu-258, and Phe-273–Ile-293.

It belongs to the nematode receptor-like protein sra family.

The protein localises to the membrane. This is Serpentine receptor class alpha-3 (sra-3) from Caenorhabditis elegans.